We begin with the raw amino-acid sequence, 482 residues long: Chromosome stability protein 9 (482 aa).

2 disordered regions span residues 239–263 and 418–482; these read SSLRNSSKNNNGTVTPSTSGRVNKN and SGLA…RRIR. Residues 240–249 show a composition bias toward low complexity; sequence SLRNSSKNNN. The segment covering 250–263 has biased composition (polar residues); the sequence is GTVTPSTSGRVNKN. Over residues 418–437 the composition is skewed to low complexity; that stretch reads SGLAFSSSSNSLQQSKLPKS. Composition is skewed to polar residues over residues 440 to 453 and 463 to 473; these read LKRSNSTQQLTNTH and RSSNTVLGSSK.

As to quaternary structure, component of the synapsis initiation complex composed of at least ZIP2, ZIP3, MSH4 and MSH5. Also interacts with ZIP1, MRE11, RAD51 and RAD53.

The protein localises to the nucleus. The protein resides in the chromosome. Its function is as follows. Component of the synapsis initiation complex (SIC) necessary for the synaptonemal complex assembly. Stabilizes the ZIP2 component to the chromosomes. The SIC complex loads onto chromosomes and nucleates ZIP1 polymerization, a molecular zipper that acts to bring homologous chromosomes in close apposition, which is required for meiotic crossover. May also be involved in double strand break repair. The protein is Chromosome stability protein 9 (CST9) of Saccharomyces cerevisiae (strain ATCC 204508 / S288c) (Baker's yeast).